Consider the following 152-residue polypeptide: Transcriptional repressor NrdR (152 aa).

The segment at 3 to 34 (CPSCQHNGTRVLDSRPVDDGKSIRRRRECESC) is a zinc-finger region. Residues 49 to 139 (LIVVKKEGVR…VYRQFKDINV (91 aa)) form the ATP-cone domain.

This sequence belongs to the NrdR family. Zn(2+) serves as cofactor.

In terms of biological role, negatively regulates transcription of bacterial ribonucleotide reductase nrd genes and operons by binding to NrdR-boxes. The chain is Transcriptional repressor NrdR from Bacillus subtilis (strain 168).